The sequence spans 484 residues: Acid alpha-amylase (484 aa).

Residue N24 is glycosylated (N-linked (GlcNAc...) asparagine). Cysteines 30 and 38 form a disulfide. Substrate is bound at residue W83. D121 serves as a coordination point for Ca(2+). H122 contacts substrate. Cysteines 150 and 164 form a disulfide. N157 is a glycosylation site (N-linked (GlcNAc...) asparagine). E162 and D175 together coordinate Ca(2+). An N-linked (GlcNAc...) asparagine glycan is attached at N197. Residue R204 participates in substrate binding. Ca(2+) is bound by residues D206, E210, and E230. D206 (nucleophile) is an active-site residue. 209 to 210 (LE) serves as a coordination point for substrate. The active-site Proton donor is the E230. Residue G234 participates in substrate binding. C240 and C283 are joined by a disulfide. D297 and R344 together coordinate substrate. C440 and C475 form a disulfide bridge.

The protein belongs to the glycosyl hydrolase 13 family. As to quaternary structure, monomer. The cofactor is Ca(2+).

It localises to the secreted. The catalysed reaction is Endohydrolysis of (1-&gt;4)-alpha-D-glucosidic linkages in polysaccharides containing three or more (1-&gt;4)-alpha-linked D-glucose units.. The protein is Acid alpha-amylase of Aspergillus niger.